Here is a 496-residue protein sequence, read N- to C-terminus: Cobyric acid synthase (496 aa).

One can recognise a GATase cobBQ-type domain in the interval 255-445 (DLEIAVLKLP…LHGLLDNGPW (191 aa)). Residue Cys336 is the Nucleophile of the active site. His437 is a catalytic residue.

The protein belongs to the CobB/CobQ family. CobQ subfamily.

It participates in cofactor biosynthesis; adenosylcobalamin biosynthesis. Catalyzes amidations at positions B, D, E, and G on adenosylcobyrinic A,C-diamide. NH(2) groups are provided by glutamine, and one molecule of ATP is hydrogenolyzed for each amidation. In Parasynechococcus marenigrum (strain WH8102), this protein is Cobyric acid synthase.